Reading from the N-terminus, the 527-residue chain is Bifunctional purine biosynthesis protein PurH (527 aa).

The MGS-like domain occupies 1–149 (MASDFLPVRR…KNFARVAVAT (149 aa)).

Belongs to the PurH family.

It catalyses the reaction (6R)-10-formyltetrahydrofolate + 5-amino-1-(5-phospho-beta-D-ribosyl)imidazole-4-carboxamide = 5-formamido-1-(5-phospho-D-ribosyl)imidazole-4-carboxamide + (6S)-5,6,7,8-tetrahydrofolate. The catalysed reaction is IMP + H2O = 5-formamido-1-(5-phospho-D-ribosyl)imidazole-4-carboxamide. It participates in purine metabolism; IMP biosynthesis via de novo pathway; 5-formamido-1-(5-phospho-D-ribosyl)imidazole-4-carboxamide from 5-amino-1-(5-phospho-D-ribosyl)imidazole-4-carboxamide (10-formyl THF route): step 1/1. The protein operates within purine metabolism; IMP biosynthesis via de novo pathway; IMP from 5-formamido-1-(5-phospho-D-ribosyl)imidazole-4-carboxamide: step 1/1. The polypeptide is Bifunctional purine biosynthesis protein PurH (Xanthomonas campestris pv. campestris (strain 8004)).